Consider the following 407-residue polypeptide: MIKVASITKVENGSIVTPKGFSAIGTAIGLKKEKKDLGAIVCDTPASCAAVYTTNQIQAAPLQVTKDSIATEGKLQAIIVNSGNANACTGMKGLQDAYEMRALGAEHFGLKENYVAVASTGVIGVPLPMDIIRNGIATLIPAKEEREAHSFSEAILTTDLITKETCYEMVIDGEKVLIAGVAKGSGMIHPNMATMLSFITTDAHIEHDVLQTTLSQITNHTFNQITIDGDTSTNDMVIVMASGLSETKPINMEHADWETFVFALQKVCEDLAKKIAQDGEGATKLIEVNVLGARTNEEAKKIAKQIVGSSLVKTAIHGEDPNWGRIISTIGQSEVAINPNTIDITLQSIAVLKNSEPQMFSEEEMKMRLQEHEIMIDVNLHLGEETGSAWGCDLSYEYVKINACYRT.

T157, K183, T194, E280, N402, and T407 together coordinate substrate. T194 acts as the Nucleophile in catalysis.

Belongs to the ArgJ family. Heterotetramer of two alpha and two beta chains.

It is found in the cytoplasm. The catalysed reaction is N(2)-acetyl-L-ornithine + L-glutamate = N-acetyl-L-glutamate + L-ornithine. The enzyme catalyses L-glutamate + acetyl-CoA = N-acetyl-L-glutamate + CoA + H(+). It functions in the pathway amino-acid biosynthesis; L-arginine biosynthesis; L-ornithine and N-acetyl-L-glutamate from L-glutamate and N(2)-acetyl-L-ornithine (cyclic): step 1/1. It participates in amino-acid biosynthesis; L-arginine biosynthesis; N(2)-acetyl-L-ornithine from L-glutamate: step 1/4. Its function is as follows. Catalyzes two activities which are involved in the cyclic version of arginine biosynthesis: the synthesis of N-acetylglutamate from glutamate and acetyl-CoA as the acetyl donor, and of ornithine by transacetylation between N(2)-acetylornithine and glutamate. This chain is Arginine biosynthesis bifunctional protein ArgJ, found in Bacillus cereus (strain ATCC 10987 / NRS 248).